The following is a 90-amino-acid chain: DNA-binding protein HU-beta (90 aa).

It belongs to the bacterial histone-like protein family. Heterodimer of an alpha and a beta chain.

In terms of biological role, histone-like DNA-binding protein which is capable of wrapping DNA to stabilize it, and thus to prevent its denaturation under extreme environmental conditions. The protein is DNA-binding protein HU-beta (hupB) of Serratia marcescens.